The following is a 34-amino-acid chain: U1-poneritoxin-Na2a (34 aa).

Expressed by the venom gland.

The protein localises to the secreted. In terms of biological role, may have antimicrobial properties, like most ant linear peptides. The sequence is that of U1-poneritoxin-Na2a from Neoponera apicalis (Ant).